The primary structure comprises 37 residues: Cellular retinoic acid-binding protein 2 (37 aa).

Positions lysine 21 to lysine 31 match the Nuclear localization signal motif.

The protein belongs to the calycin superfamily. Fatty-acid binding protein (FABP) family. As to expression, embryo.

The protein resides in the cytoplasm. Its subcellular location is the endoplasmic reticulum. The protein localises to the nucleus. Transports retinoic acid to the nucleus. Regulates the access of retinoic acid to the nuclear retinoic acid receptors. This chain is Cellular retinoic acid-binding protein 2 (CRABP2), found in Gallus gallus (Chicken).